The sequence spans 258 residues: Apolipoprotein E (258 aa).

The signal sequence occupies residues 1–19 (MRVWTVLLGAVLLLAACQA). Repeat copies occupy residues 112 to 133 (VDME…QVAG), 134 to 155 (QNLE…KRLA), and 156 to 173 (KDTE…KEAT). The 3 X 22 AA approximate tandem repeats stretch occupies residues 112–173 (VDMEEAKTRV…KLEAYSKEAT (62 aa)).

The protein belongs to the apolipoprotein A1/A4/E family. In terms of assembly, homotetramer.

It localises to the secreted. The protein localises to the extracellular space. Its subcellular location is the extracellular matrix. In terms of biological role, APOE is an apolipoprotein, a protein associating with lipid particles, that mainly functions in lipoprotein-mediated lipid transport between organs via the plasma and interstitial fluids. APOE is a core component of plasma lipoproteins and is involved in their production, conversion and clearance. Apolipoproteins are amphipathic molecules that interact both with lipids of the lipoprotein particle core and the aqueous environment of the plasma. In Alligator mississippiensis (American alligator), this protein is Apolipoprotein E (APOE).